The following is a 168-amino-acid chain: Small ribosomal subunit protein uS5 (168 aa).

The 64-residue stretch at 14-77 (FEERVVSINR…EAAKKNLITV (64 aa)) folds into the S5 DRBM domain.

The protein belongs to the universal ribosomal protein uS5 family. As to quaternary structure, part of the 30S ribosomal subunit. Contacts proteins S4 and S8.

In terms of biological role, with S4 and S12 plays an important role in translational accuracy. Located at the back of the 30S subunit body where it stabilizes the conformation of the head with respect to the body. The chain is Small ribosomal subunit protein uS5 from Lactococcus lactis subsp. cremoris (strain MG1363).